Here is a 306-residue protein sequence, read N- to C-terminus: Ornithine carbamoyltransferase (306 aa).

Carbamoyl phosphate contacts are provided by residues 51-54 (STRT), Q78, R102, and 129-132 (HPCQ). L-ornithine-binding positions include N160, D223, and 227–228 (SM). Carbamoyl phosphate contacts are provided by residues 263–264 (CL) and R291.

Belongs to the aspartate/ornithine carbamoyltransferase superfamily. OTCase family.

The protein localises to the cytoplasm. It carries out the reaction carbamoyl phosphate + L-ornithine = L-citrulline + phosphate + H(+). The protein operates within amino-acid biosynthesis; L-arginine biosynthesis; L-arginine from L-ornithine and carbamoyl phosphate: step 1/3. Its function is as follows. Reversibly catalyzes the transfer of the carbamoyl group from carbamoyl phosphate (CP) to the N(epsilon) atom of ornithine (ORN) to produce L-citrulline. The chain is Ornithine carbamoyltransferase from Nostoc sp. (strain PCC 7120 / SAG 25.82 / UTEX 2576).